A 224-amino-acid polypeptide reads, in one-letter code: ATP-dependent dethiobiotin synthetase BioD (224 aa).

Residue 13–18 (NVGKTI) participates in ATP binding. Mg(2+) is bound at residue Thr-17. The active site involves Lys-38. A substrate-binding site is contributed by Ser-42. Residues Asp-55, 116 to 119 (EGAG), 176 to 177 (NN), and Asn-211 contribute to the ATP site. Residues Asp-55 and Glu-116 each contribute to the Mg(2+) site.

It belongs to the dethiobiotin synthetase family. In terms of assembly, homodimer. Mg(2+) serves as cofactor.

The protein localises to the cytoplasm. The enzyme catalyses (7R,8S)-7,8-diammoniononanoate + CO2 + ATP = (4R,5S)-dethiobiotin + ADP + phosphate + 3 H(+). Its pathway is cofactor biosynthesis; biotin biosynthesis; biotin from 7,8-diaminononanoate: step 1/2. Catalyzes a mechanistically unusual reaction, the ATP-dependent insertion of CO2 between the N7 and N8 nitrogen atoms of 7,8-diaminopelargonic acid (DAPA, also called 7,8-diammoniononanoate) to form a ureido ring. The polypeptide is ATP-dependent dethiobiotin synthetase BioD (Buchnera aphidicola subsp. Acyrthosiphon pisum (strain APS) (Acyrthosiphon pisum symbiotic bacterium)).